Here is a 101-residue protein sequence, read N- to C-terminus: DNA-binding protein Fis (101 aa).

The segment at residues glutamine 77–lysine 96 is a DNA-binding region (H-T-H motif).

It belongs to the transcriptional regulatory Fis family. As to quaternary structure, homodimer.

In terms of biological role, activates ribosomal RNA transcription. Plays a direct role in upstream activation of rRNA promoters. This is DNA-binding protein Fis from Shewanella pealeana (strain ATCC 700345 / ANG-SQ1).